A 79-amino-acid polypeptide reads, in one-letter code: CDC42 small effector protein 1 (79 aa).

S-palmitoyl cysteine attachment occurs at residues cysteine 10 and cysteine 11. A CRIB domain is found at 30–43 (IGEPMNFVHLTHIG). Residues 41–79 (HIGSGDMGASDGLPRAGGVQEQMRSKCGRDRQWSNSGVL) are disordered. Residues 63-72 (MRSKCGRDRQ) are compositionally biased toward basic and acidic residues.

Belongs to the CDC42SE/SPEC family.

Its subcellular location is the cytoplasm. It localises to the cytoskeleton. It is found in the cell membrane. Functionally, probably involved in the organization of the actin cytoskeleton by acting downstream of CDC42, inducing actin filament assembly. The sequence is that of CDC42 small effector protein 1 (cdc42se1) from Xenopus tropicalis (Western clawed frog).